The sequence spans 100 residues: ATP synthase subunit c (100 aa).

The next 2 helical transmembrane spans lie at 27–47 (SVIAAGIGLGLAALGGAIGMG) and 72–92 (FIALAMIEAQVIYALVITLIV).

It belongs to the ATPase C chain family. F-type ATPases have 2 components, F(1) - the catalytic core - and F(0) - the membrane proton channel. F(1) has five subunits: alpha(3), beta(3), gamma(1), delta(1), epsilon(1). F(0) has three main subunits: a(1), b(2) and c(10-14). The alpha and beta chains form an alternating ring which encloses part of the gamma chain. F(1) is attached to F(0) by a central stalk formed by the gamma and epsilon chains, while a peripheral stalk is formed by the delta and b chains.

The protein resides in the cell inner membrane. Its function is as follows. F(1)F(0) ATP synthase produces ATP from ADP in the presence of a proton or sodium gradient. F-type ATPases consist of two structural domains, F(1) containing the extramembraneous catalytic core and F(0) containing the membrane proton channel, linked together by a central stalk and a peripheral stalk. During catalysis, ATP synthesis in the catalytic domain of F(1) is coupled via a rotary mechanism of the central stalk subunits to proton translocation. This chain is ATP synthase subunit c, found in Campylobacter curvus (strain 525.92).